Here is a 194-residue protein sequence, read N- to C-terminus: Anthranilate synthase component 2 (194 aa).

The Glutamine amidotransferase type-1 domain occupies 2–194 (KIFFIDNFDS…QSVGFLRELS (193 aa)). An L-glutamine-binding site is contributed by 57–59 (GPG). Cys84 acts as the Nucleophile; for GATase activity in catalysis. L-glutamine contacts are provided by residues Gln88 and 134-135 (SL). Residues His170 and Glu172 each act as for GATase activity in the active site.

Heterotetramer consisting of two non-identical subunits: a beta subunit (TrpG) and a large alpha subunit (TrpE).

The catalysed reaction is chorismate + L-glutamine = anthranilate + pyruvate + L-glutamate + H(+). It participates in amino-acid biosynthesis; L-tryptophan biosynthesis; L-tryptophan from chorismate: step 1/5. Functionally, part of a heterotetrameric complex that catalyzes the two-step biosynthesis of anthranilate, an intermediate in the biosynthesis of L-tryptophan. In the first step, the glutamine-binding beta subunit (TrpG) of anthranilate synthase (AS) provides the glutamine amidotransferase activity which generates ammonia as a substrate that, along with chorismate, is used in the second step, catalyzed by the large alpha subunit of AS (TrpE) to produce anthranilate. In the absence of TrpG, TrpE can synthesize anthranilate directly from chorismate and high concentrations of ammonia. The chain is Anthranilate synthase component 2 (trpG) from Helicobacter pylori (strain J99 / ATCC 700824) (Campylobacter pylori J99).